Here is a 283-residue protein sequence, read N- to C-terminus: Succinate dehydrogenase [ubiquinone] iron-sulfur subunit, mitochondrial (283 aa).

The 80-residue stretch at 66-145 folds into the 2Fe-2S ferredoxin-type domain; the sequence is KKPTLQTYSI…PVKIYPLPHM (80 aa). 4 residues coordinate [2Fe-2S] cluster: C105, C110, C113, and C125. The 4Fe-4S ferredoxin-type domain maps to 186–216; it reads DRKKLDGMYECILCACCSTSCPSYWWNQDEY. [4Fe-4S] cluster contacts are provided by C196, C199, and C202. C206 serves as a coordination point for [3Fe-4S] cluster. W211 serves as a coordination point for a ubiquinone. Positions 253 and 259 each coordinate [3Fe-4S] cluster. A [4Fe-4S] cluster-binding site is contributed by C263.

It belongs to the succinate dehydrogenase/fumarate reductase iron-sulfur protein family. As to quaternary structure, component of complex II composed of four subunits: a flavoprotein (FP), an iron-sulfur protein (IP), and a cytochrome b composed of a large and a small subunit. It depends on [2Fe-2S] cluster as a cofactor. [3Fe-4S] cluster is required as a cofactor. [4Fe-4S] cluster serves as cofactor.

It is found in the mitochondrion inner membrane. The enzyme catalyses a quinone + succinate = fumarate + a quinol. It functions in the pathway carbohydrate metabolism; tricarboxylic acid cycle; fumarate from succinate (eukaryal route): step 1/1. In terms of biological role, iron-sulfur protein (IP) subunit of succinate dehydrogenase (SDH) that is involved in complex II of the mitochondrial electron transport chain and is responsible for transferring electrons from succinate to ubiquinone (coenzyme Q). The polypeptide is Succinate dehydrogenase [ubiquinone] iron-sulfur subunit, mitochondrial (SDH2) (Uromyces fabae (Rust fungus)).